The following is an 842-amino-acid chain: MutS protein homolog him-14 (842 aa).

Positions Met-1 to Glu-21 are disordered. Gly-588–Ser-595 lines the ATP pocket.

The protein belongs to the DNA mismatch repair MutS family. As to quaternary structure, heterooligomer of him-14 and msh-5.

Its subcellular location is the nucleus. In terms of biological role, required during the pachytene stage of meiotic prophase for the formation of crossovers between homologous chromosomes. Together with msh-5 and zhp-3 plays a role in the activation of DNA damage-dependent apoptosis at the DNA damage checkpoint in pachytene cells. Not needed for pairing or synapsis. May promote crossing over by interfering with Holliday junction branch migration. Has no apparent role in DNA mismatch repair. The chain is MutS protein homolog him-14 from Caenorhabditis elegans.